Reading from the N-terminus, the 337-residue chain is Putative carboxypeptidase TP_0688 (337 aa).

S118 serves as the catalytic Nucleophile. Active-site charge relay system residues include E234 and H302.

This sequence belongs to the peptidase S66 family.

This chain is Putative carboxypeptidase TP_0688, found in Treponema pallidum (strain Nichols).